The chain runs to 72 residues: UPF0346 protein GTNG_1419 (72 aa).

It belongs to the UPF0346 family.

The polypeptide is UPF0346 protein GTNG_1419 (Geobacillus thermodenitrificans (strain NG80-2)).